The following is a 356-amino-acid chain: S-adenosylmethionine:tRNA ribosyltransferase-isomerase (356 aa).

The protein belongs to the QueA family. In terms of assembly, monomer.

It localises to the cytoplasm. It catalyses the reaction 7-aminomethyl-7-carbaguanosine(34) in tRNA + S-adenosyl-L-methionine = epoxyqueuosine(34) in tRNA + adenine + L-methionine + 2 H(+). It participates in tRNA modification; tRNA-queuosine biosynthesis. Transfers and isomerizes the ribose moiety from AdoMet to the 7-aminomethyl group of 7-deazaguanine (preQ1-tRNA) to give epoxyqueuosine (oQ-tRNA). The protein is S-adenosylmethionine:tRNA ribosyltransferase-isomerase of Escherichia coli (strain UTI89 / UPEC).